A 633-amino-acid chain; its full sequence is Glutamyl-tRNA(Gln) amidotransferase subunit E (633 aa).

The protein belongs to the GatB/GatE family. GatE subfamily. As to quaternary structure, heterodimer of GatD and GatE.

The enzyme catalyses L-glutamyl-tRNA(Gln) + L-glutamine + ATP + H2O = L-glutaminyl-tRNA(Gln) + L-glutamate + ADP + phosphate + H(+). Its function is as follows. Allows the formation of correctly charged Gln-tRNA(Gln) through the transamidation of misacylated Glu-tRNA(Gln) in organisms which lack glutaminyl-tRNA synthetase. The reaction takes place in the presence of glutamine and ATP through an activated gamma-phospho-Glu-tRNA(Gln). The GatDE system is specific for glutamate and does not act on aspartate. This chain is Glutamyl-tRNA(Gln) amidotransferase subunit E, found in Methanosarcina barkeri (strain Fusaro / DSM 804).